A 388-amino-acid chain; its full sequence is Chaperone protein DnaJ (388 aa).

A J domain is found at aspartate 5–glycine 69. The segment at glycine 145–lysine 227 adopts a CR-type zinc-finger fold. Zn(2+) contacts are provided by cysteine 158, cysteine 161, cysteine 175, cysteine 178, cysteine 201, cysteine 204, cysteine 215, and cysteine 218. CXXCXGXG motif repeat units follow at residues cysteine 158 to glycine 165, cysteine 175 to glycine 182, cysteine 201 to glycine 208, and cysteine 215 to glycine 222.

The protein belongs to the DnaJ family. In terms of assembly, homodimer. Zn(2+) is required as a cofactor.

Its subcellular location is the cytoplasm. Participates actively in the response to hyperosmotic and heat shock by preventing the aggregation of stress-denatured proteins and by disaggregating proteins, also in an autonomous, DnaK-independent fashion. Unfolded proteins bind initially to DnaJ; upon interaction with the DnaJ-bound protein, DnaK hydrolyzes its bound ATP, resulting in the formation of a stable complex. GrpE releases ADP from DnaK; ATP binding to DnaK triggers the release of the substrate protein, thus completing the reaction cycle. Several rounds of ATP-dependent interactions between DnaJ, DnaK and GrpE are required for fully efficient folding. Also involved, together with DnaK and GrpE, in the DNA replication of plasmids through activation of initiation proteins. This is Chaperone protein DnaJ from Lactobacillus gasseri (strain ATCC 33323 / DSM 20243 / BCRC 14619 / CIP 102991 / JCM 1131 / KCTC 3163 / NCIMB 11718 / NCTC 13722 / AM63).